The sequence spans 64 residues: Large ribosomal subunit protein bL33c (64 aa).

It belongs to the bacterial ribosomal protein bL33 family.

It is found in the plastid. The protein localises to the chloroplast. The protein is Large ribosomal subunit protein bL33c (rpl33) of Trieres chinensis (Marine centric diatom).